We begin with the raw amino-acid sequence, 344 residues long: Glyceraldehyde-3-phosphate dehydrogenase (344 aa).

NAD(+)-binding positions include 11–12 and glycine 110; that span reads TI. 139-141 is a D-glyceraldehyde 3-phosphate binding site; that stretch reads SCN. Catalysis depends on cysteine 140, which acts as the Nucleophile. Arginine 169 is an NAD(+) binding site. A D-glyceraldehyde 3-phosphate-binding site is contributed by 195 to 196; that stretch reads HG. Glutamine 302 is an NAD(+) binding site.

The protein belongs to the glyceraldehyde-3-phosphate dehydrogenase family. In terms of assembly, homotetramer.

It localises to the cytoplasm. The catalysed reaction is D-glyceraldehyde 3-phosphate + phosphate + NADP(+) = (2R)-3-phospho-glyceroyl phosphate + NADPH + H(+). It carries out the reaction D-glyceraldehyde 3-phosphate + phosphate + NAD(+) = (2R)-3-phospho-glyceroyl phosphate + NADH + H(+). It participates in carbohydrate degradation; glycolysis; pyruvate from D-glyceraldehyde 3-phosphate: step 1/5. The polypeptide is Glyceraldehyde-3-phosphate dehydrogenase (Pyrobaculum neutrophilum (strain DSM 2338 / JCM 9278 / NBRC 100436 / V24Sta) (Thermoproteus neutrophilus)).